The chain runs to 145 residues: Acidic phospholipase A2 1 (145 aa).

Residues 1 to 21 (MYPAHLLVLLAVCVSLLGATA) form the signal peptide. Positions 22-27 (IPPLPL) are excised as a propeptide. 7 disulfides stabilise this stretch: cysteine 38-cysteine 98, cysteine 54-cysteine 144, cysteine 56-cysteine 72, cysteine 71-cysteine 125, cysteine 78-cysteine 118, cysteine 87-cysteine 111, and cysteine 105-cysteine 116. 3 residues coordinate Ca(2+): tyrosine 55, glycine 57, and glycine 59. Histidine 75 is a catalytic residue. Aspartate 76 lines the Ca(2+) pocket. The active site involves aspartate 119.

It belongs to the phospholipase A2 family. Group I subfamily. D49 sub-subfamily. As to quaternary structure, monomer. It depends on Ca(2+) as a cofactor. Expressed by the venom gland.

The protein resides in the secreted. The catalysed reaction is a 1,2-diacyl-sn-glycero-3-phosphocholine + H2O = a 1-acyl-sn-glycero-3-phosphocholine + a fatty acid + H(+). PLA2 catalyzes the calcium-dependent hydrolysis of the 2-acyl groups in 3-sn-phosphoglycerides. The chain is Acidic phospholipase A2 1 from Laticauda semifasciata (Black-banded sea krait).